A 434-amino-acid chain; its full sequence is MANFDLTRINCQFLDRHLTFPLLEFLCGKEIYNQQELLEYILETVNKTNMIDYTMDTRKRLNLSQEMPDELVQRKAEVLATLKQLQNEVAPIMKATDILKNGESMKDSKTFVNALQKDYNFKVEHLESAYKLAKYLYECGNYQESTSYLYFCLIVMSPNDKNYLNVLWGKLAAEILTLNWNTALEDLTRLRDYIDSANFSTIQALQQRTWLIHWSVLVFFNHPKGRDLIIEMFLYKPLYLNAIQTMCPHIMRYLATAVVINRTRRNALKDLIKVIQQESYTYRDPITEFLECLYVNFDFEGARLKLHECQTVILNDFFIVACLNEFVEDARLMIFETFCRIHQCITISMLADKLNMKPNEAECWIVNLIRNARLNAKIDSKLGHVVMGTQPLSPYQQLVEKIDSLSMRSEHLAGLIERKSKQNNKESIDSWKYY.

The region spanning 219 to 392 (FFNHPKGRDL…GHVVMGTQPL (174 aa)) is the PCI domain.

Belongs to the eIF-3 subunit E family. In terms of assembly, component of the eukaryotic translation initiation factor 3 (eIF-3) complex. The eIF-3 complex interacts with pix. Interacts with mxt.

Its subcellular location is the cytoplasm. In terms of biological role, component of the eukaryotic translation initiation factor 3 (eIF-3) complex, which is involved in protein synthesis of a specialized repertoire of mRNAs and, together with other initiation factors, stimulates binding of mRNA and methionyl-tRNAi to the 40S ribosome. The eIF-3 complex specifically targets and initiates translation of a subset of mRNAs involved in cell proliferation. This Drosophila persimilis (Fruit fly) protein is Eukaryotic translation initiation factor 3 subunit E (eIF3-S6).